A 1029-amino-acid polypeptide reads, in one-letter code: Exportin-T (1029 aa).

It belongs to the exportin family.

The protein localises to the nucleus. It is found in the cytoplasm. Functionally, tRNA nucleus export receptor which facilitates tRNA translocation across the nuclear pore complex. Involved in pre-tRNA splicing, probably by affecting the interaction of pre-tRNA with splicing endonuclease. The sequence is that of Exportin-T (los1) from Aspergillus clavatus (strain ATCC 1007 / CBS 513.65 / DSM 816 / NCTC 3887 / NRRL 1 / QM 1276 / 107).